We begin with the raw amino-acid sequence, 198 residues long: Protein GrpE (198 aa).

This sequence belongs to the GrpE family. Homodimer.

Its subcellular location is the cytoplasm. Its function is as follows. Participates actively in the response to hyperosmotic and heat shock by preventing the aggregation of stress-denatured proteins, in association with DnaK and GrpE. It is the nucleotide exchange factor for DnaK and may function as a thermosensor. Unfolded proteins bind initially to DnaJ; upon interaction with the DnaJ-bound protein, DnaK hydrolyzes its bound ATP, resulting in the formation of a stable complex. GrpE releases ADP from DnaK; ATP binding to DnaK triggers the release of the substrate protein, thus completing the reaction cycle. Several rounds of ATP-dependent interactions between DnaJ, DnaK and GrpE are required for fully efficient folding. This is Protein GrpE from Vibrio harveyi (Beneckea harveyi).